The sequence spans 380 residues: Probable inorganic pyrophosphatase (380 aa).

The Mg(2+) site is built by D198, D203, and D235.

Belongs to the PPase family. Requires Mg(2+) as cofactor.

The catalysed reaction is diphosphate + H2O = 2 phosphate + H(+). This chain is Probable inorganic pyrophosphatase, found in Plasmodium falciparum (isolate 3D7).